The following is a 790-amino-acid chain: Protein SEY1 (790 aa).

Residues 1–692 are Cytoplasmic-facing; the sequence is MELSEGELSH…KRSIVQHITQ (692 aa). In terms of domain architecture, GB1/RHD3-type G spans 55–284; that stretch reads GNNYHIISVF…VSNELFKPEY (230 aa). 65-72 contacts GTP; the sequence is GSQSTGKS. A helical membrane pass occupies residues 693 to 713; that stretch reads IPYYIYLIILVLGWNEFMAII. Topologically, residues 714–716 are lumenal; that stretch reads RNP. Residues 717–737 traverse the membrane as a helical segment; sequence LFFSLSIVLGATVYVLYYLGL. At 738–790 the chain is on the cytoplasmic side; it reads LRPALVVAQRTMDEVIVMAKTKLREVLIDDHEVTGRQLNKMAGSKENIELDDM.

Belongs to the TRAFAC class dynamin-like GTPase superfamily. GB1/RHD3 GTPase family. RHD3 subfamily.

It is found in the endoplasmic reticulum membrane. In terms of biological role, cooperates with the reticulon proteins and tubule-shaping DP1 family proteins to generate and maintain the structure of the tubular endoplasmic reticulum network. Has GTPase activity, which is required for its function in ER organization. Required for virulence and resistance to cycloheximide. The polypeptide is Protein SEY1 (Candida albicans (strain SC5314 / ATCC MYA-2876) (Yeast)).